The chain runs to 150 residues: Ribosomal RNA large subunit methyltransferase H (150 aa).

Residues Ala-100 and Leu-118–Phe-123 contribute to the S-adenosyl-L-methionine site.

This sequence belongs to the RNA methyltransferase RlmH family. As to quaternary structure, homodimer.

It is found in the cytoplasm. The catalysed reaction is pseudouridine(1915) in 23S rRNA + S-adenosyl-L-methionine = N(3)-methylpseudouridine(1915) in 23S rRNA + S-adenosyl-L-homocysteine + H(+). Functionally, specifically methylates the pseudouridine at position 1915 (m3Psi1915) in 23S rRNA. The protein is Ribosomal RNA large subunit methyltransferase H of Helicobacter pylori (strain ATCC 700392 / 26695) (Campylobacter pylori).